Reading from the N-terminus, the 423-residue chain is tRNA(Ile)-lysidine synthase (423 aa).

43 to 48 contacts ATP; that stretch reads SSGVDS.

Belongs to the tRNA(Ile)-lysidine synthase family.

The protein resides in the cytoplasm. It catalyses the reaction cytidine(34) in tRNA(Ile2) + L-lysine + ATP = lysidine(34) in tRNA(Ile2) + AMP + diphosphate + H(+). Ligates lysine onto the cytidine present at position 34 of the AUA codon-specific tRNA(Ile) that contains the anticodon CAU, in an ATP-dependent manner. Cytidine is converted to lysidine, thus changing the amino acid specificity of the tRNA from methionine to isoleucine. The sequence is that of tRNA(Ile)-lysidine synthase from Helicobacter hepaticus (strain ATCC 51449 / 3B1).